The primary structure comprises 72 residues: Large ribosomal subunit protein bL31 (72 aa).

Cys16, Cys18, Cys37, and Cys40 together coordinate Zn(2+).

The protein belongs to the bacterial ribosomal protein bL31 family. Type A subfamily. In terms of assembly, part of the 50S ribosomal subunit. Zn(2+) serves as cofactor.

In terms of biological role, binds the 23S rRNA. This chain is Large ribosomal subunit protein bL31, found in Buchnera aphidicola subsp. Acyrthosiphon pisum (strain APS) (Acyrthosiphon pisum symbiotic bacterium).